Here is a 136-residue protein sequence, read N- to C-terminus: Acyl carrier protein 2, chloroplastic (136 aa).

The transit peptide at 1–51 directs the protein to the chloroplast; that stretch reads MASIAASASISLQARPRQLAIAASQVKSFSNGRRSSLSFNLRQLPTRLTVS. One can recognise a Carrier domain in the interval 56-131; the sequence is PETVDKVCAV…QAAALIEELL (76 aa). An O-(pantetheine 4'-phosphoryl)serine modification is found at serine 91.

It belongs to the acyl carrier protein (ACP) family. 4'-phosphopantetheine is transferred from CoA to a specific serine of apo-ACP by acpS. This modification is essential for activity because fatty acids are bound in thioester linkage to the sulfhydryl of the prosthetic group.

It localises to the plastid. The protein localises to the chloroplast. Its function is as follows. Carrier of the growing fatty acid chain in fatty acid biosynthesis. The protein is Acyl carrier protein 2, chloroplastic (ACP2) of Arabidopsis thaliana (Mouse-ear cress).